Here is an 85-residue protein sequence, read N- to C-terminus: Large ribosomal subunit protein bL27 (85 aa).

The segment covering methionine 1–glycine 13 has biased composition (polar residues). Positions methionine 1–glycine 26 are disordered.

The protein belongs to the bacterial ribosomal protein bL27 family.

The protein is Large ribosomal subunit protein bL27 of Mycoplasma mobile (strain ATCC 43663 / 163K / NCTC 11711) (Mesomycoplasma mobile).